We begin with the raw amino-acid sequence, 434 residues long: MAKIGFVSLGCPKALVDSEQILSRLKALGYETSPSYEEAELVIVNTCGFINEAVEESLEAIGEALKENGKVVVTGCLGARPEKIRERHPQVLAVTGPGEVERVLEAVQEVLPAPRDPFLDLIPPQVKLTPRHYAYVKLSEGCDHRCSFCIIPKLRGRLRSRDAADVLAEAARLVATGTKELLLVAQDLSAYGVDLGHRESLWGDRPVRAELKDLLTHMAELGVWIRLHYVYPYPHVKDLLPLMAEGKVLPYLDVPLQHASPRILRLMRRPGGYESHLKTLKAWREVVPELALRSTFIVGFPGETEEDFQILLDFLEEAELDRVGVFAYSPVEGAEANRLPDPVPEEVKEERKARLLEVQARVSLRKNQRFVGKTLEVLVDELPEPGLAVGRTYRDAPGVDGVVYVETDGTVRVGERIPVRILRADTYDLHGVQA.

The MTTase N-terminal domain maps to 2-112 (AKIGFVSLGC…VLEAVQEVLP (111 aa)). Residues Cys11, Cys47, Cys76, Cys142, Cys146, and Cys149 each contribute to the [4Fe-4S] cluster site. In terms of domain architecture, Radical SAM core spans 128 to 365 (LTPRHYAYVK…LEVQARVSLR (238 aa)). Residues 368 to 434 (QRFVGKTLEV…DTYDLHGVQA (67 aa)) enclose the TRAM domain.

The protein belongs to the methylthiotransferase family. RimO subfamily. Requires [4Fe-4S] cluster as cofactor.

Its subcellular location is the cytoplasm. It catalyses the reaction L-aspartate(89)-[ribosomal protein uS12]-hydrogen + (sulfur carrier)-SH + AH2 + 2 S-adenosyl-L-methionine = 3-methylsulfanyl-L-aspartate(89)-[ribosomal protein uS12]-hydrogen + (sulfur carrier)-H + 5'-deoxyadenosine + L-methionine + A + S-adenosyl-L-homocysteine + 2 H(+). Its function is as follows. Catalyzes the methylthiolation of an aspartic acid residue of ribosomal protein uS12. The sequence is that of Ribosomal protein uS12 methylthiotransferase RimO from Thermus thermophilus (strain ATCC BAA-163 / DSM 7039 / HB27).